The sequence spans 469 residues: Glutamate--tRNA ligase (469 aa).

A 'HIGH' region motif is present at residues 9–19 (PSPTGFLHVGG). Residues Cys98, Cys100, Cys125, and Asp127 each coordinate Zn(2+). The 'KMSKS' region motif lies at 236-240 (KLSKR). Lys239 contributes to the ATP binding site.

It belongs to the class-I aminoacyl-tRNA synthetase family. Glutamate--tRNA ligase type 1 subfamily. In terms of assembly, monomer. Requires Zn(2+) as cofactor.

It localises to the cytoplasm. The catalysed reaction is tRNA(Glu) + L-glutamate + ATP = L-glutamyl-tRNA(Glu) + AMP + diphosphate. Catalyzes the attachment of glutamate to tRNA(Glu) in a two-step reaction: glutamate is first activated by ATP to form Glu-AMP and then transferred to the acceptor end of tRNA(Glu). The sequence is that of Glutamate--tRNA ligase from Shewanella sp. (strain W3-18-1).